The sequence spans 25 residues: Toxin LyeTx 1 (25 aa).

Leucine amide is present on Leu25.

In terms of tissue distribution, expressed by the venom gland.

The protein localises to the secreted. Functionally, has antimicrobial activity against Gram-positive bacterium S.aureus (MIC=3.79 uM), Gram-negative bacterium E.coli (MIC=7.81 uM) and yeasts C.krusei (MIC=26.3 uM) and C.neoformans (MIC=13.2 uM). Has hemolytic activity against rabbit erythrocytes. Forms pores in lipid bilayers in vitro; pore formation is reduced when cholesterol is present in the bilayers. The sequence is that of Toxin LyeTx 1 from Lycosa erythrognatha (Wolf spider).